Here is a 727-residue protein sequence, read N- to C-terminus: MTDSLEYNDINAEVRGVLSSGRLKLTDQNIIFKNNKTGKVEQISVDDIDLINSQKFVGTWGLRVFTKSGALHRFTGFRDSEHEKLGKFIKDAYSQEMVEKEMCVKGWNWGTARFMGSVLSFDKDSKTIFEVPLSHVSQCVTGKNEVTLEYHQNDDAPVGLLEMRFHIPAVESADDDPVEKFHQNVMSKASVISASGESIAIFREIQILTPRGRYDIKIFSTFFQLHGKTFDYKIPMDSVLRLFMLPHKDSRQMFFVLSLDPPIKQGQTRYHYLVLLFAPDEETTIELPFSEAELRDKYEGKLEKELSGPVYEVMGKVMKVLIGRKITGPGNFIGHSGTAAVGCSFKAAAGYLYPLERGFIYIHKPPLHIRFEEISSVNFARSGGSTRSFDFEVTLKNGTVHIFSSIEKEEYAKLFDFITQKKLHVSNMGKDKSGYKDVDFGDSDNENEPDAYLARLKAEAREKEEEDDDGDDSDEESTDEDFKPNENESDVAEEYDSNVEDDSDDDSDASGGGGDGGTDGSTKKKHKEKKNEKKEKTHKEKEKIKKPTKKKDTGKPKRGTSAFMLWLNDTRESIKRENPGIKVTEIAKKGGEMWKELKDKSKWEEAANKDKIRYQEEMRNYKSGAGGGSEDEKGGTSKATKKRKSEPSPSKKANTSGSGFKSKEYISDDESTSDDQEKVKEIPKKKNKSTAEDKDKNSKKSESEGGDSDDASNASEDDDEEEDEGSD.

2 disordered regions span residues A458–L565 and E596–D727. Acidic residues-rich tracts occupy residues E464–D479 and N487–D508. Positions S510–D519 are enriched in gly residues. 3 stretches are compositionally biased toward basic and acidic residues: residues K529–K555, E596–N620, and D675–S703. The segment at residues P556 to K622 is a DNA-binding region (HMG box). Over residues E704–D727 the composition is skewed to acidic residues.

This sequence belongs to the SSRP1 family. Component of the FACT complex, a stable heterodimer of dre4/spt16 and Ssrp.

It localises to the nucleus. The protein localises to the chromosome. It is found in the nucleolus. Its function is as follows. Component of the FACT complex, a general chromatin factor that acts to reorganize nucleosomes. The FACT complex is involved in multiple processes that require DNA as a template such as mRNA elongation, DNA replication and DNA repair. During transcription elongation the FACT complex acts as a histone chaperone that both destabilizes and restores nucleosomal structure. It facilitates the passage of RNA polymerase II and transcription by promoting the dissociation of one histone H2A-H2B dimer from the nucleosome, then subsequently promotes the reestablishment of the nucleosome following the passage of RNA polymerase II. Binds specifically to single-stranded DNA and RNA with highest affinity for nucleotides G and U. The FACT complex is required for expression of Hox genes. The polypeptide is FACT complex subunit Ssrp1 (Ssrp) (Drosophila pseudoobscura pseudoobscura (Fruit fly)).